Consider the following 236-residue polypeptide: MTRRYWNIHLEEMMEAGVHFGHGTRKWNPRMAPYISAKRKGIHITNLTRTARFLSEACDLVFDAASRGKNFLLVGTKNKAADSVASAAIRARCHYVNKKWLGGMLTNWSTTETRLHKFRDLRAEQKTGKLNRLPKRDAAMLKRQLSHLQTYLGGIKYMTGLPDIVIIVDQQEEYTALRECLTLGIPTICLIDTNCDPDLADISIPANDDAIASIRLILNKLVSAICEGRSSSIRNR.

This sequence belongs to the universal ribosomal protein uS2 family.

Its subcellular location is the plastid. The protein resides in the chloroplast. The polypeptide is Small ribosomal subunit protein uS2c (rps2) (Liriodendron tulipifera (Tuliptree)).